The following is a 51-amino-acid chain: ATP synthase F(1) complex subunit epsilon, mitochondrial (51 aa).

3 positions are modified to N6-acetyllysine; alternate: Lys-21, Lys-32, and Lys-37. An N6-succinyllysine; alternate mark is found at Lys-21, Lys-32, and Lys-37. Lys-44 is subject to N6-acetyllysine.

This sequence belongs to the eukaryotic ATPase epsilon family. Component of the ATP synthase complex composed at least of ATP5F1A/subunit alpha, ATP5F1B/subunit beta, ATP5MC1/subunit c (homooctomer), MT-ATP6/subunit a, MT-ATP8/subunit 8, ATP5ME/subunit e, ATP5MF/subunit f, ATP5MG/subunit g, ATP5MK/subunit k, ATP5MJ/subunit j, ATP5F1C/subunit gamma, ATP5F1D/subunit delta, ATP5F1E/subunit epsilon, ATP5PF/subunit F6, ATP5PB/subunit b, ATP5PD/subunit d, ATP5PO/subunit OSCP. ATP synthase complex consists of a soluble F(1) head domain (subunits alpha(3) and beta(3)) - the catalytic core - and a membrane F(0) domain - the membrane proton channel (subunits c, a, 8, e, f, g, k and j). These two domains are linked by a central stalk (subunits gamma, delta, and epsilon) rotating inside the F1 region and a stationary peripheral stalk (subunits F6, b, d, and OSCP).

Its subcellular location is the mitochondrion. It localises to the mitochondrion inner membrane. Its function is as follows. Subunit epsilon, of the mitochondrial membrane ATP synthase complex (F(1)F(0) ATP synthase or Complex V) that produces ATP from ADP in the presence of a proton gradient across the membrane which is generated by electron transport complexes of the respiratory chain. ATP synthase complex consist of a soluble F(1) head domain - the catalytic core - and a membrane F(1) domain - the membrane proton channel. These two domains are linked by a central stalk rotating inside the F(1) region and a stationary peripheral stalk. During catalysis, ATP synthesis in the catalytic domain of F(1) is coupled via a rotary mechanism of the central stalk subunits to proton translocation. In vivo, can only synthesize ATP although its ATP hydrolase activity can be activated artificially in vitro. May be essential for the assembly of F(1) and may play an important role in the incorporation of the hydrophobic subunit c into the F(1)-c oligomer rotor of the mitochondrial ATP synthase complex. In Rattus norvegicus (Rat), this protein is ATP synthase F(1) complex subunit epsilon, mitochondrial.